A 479-amino-acid polypeptide reads, in one-letter code: Anaerobic nitric oxide reductase flavorubredoxin (479 aa).

Residues 30–210 (LRGSSYNSYL…PFSRLVTPKI (181 aa)) form a zinc metallo-hydrolase region. Residues His-79, Glu-81, Asp-83, His-147, Asp-166, and His-227 each contribute to the Fe cation site. The Flavodoxin-like domain occupies 254–393 (ITIFYDTMSN…LCREHGREIA (140 aa)). Residues 260 to 264 (TMSNN) and 342 to 369 (AFGSHGWSGGAVDRLSTRLQDAGFEMSL) each bind FMN. Residues 423-474 (GPRMQCSVCQWIYDPAKGEPMQDVAPGTPWSEVPDNFLCPECSLGKDVFDEL) form the Rubredoxin-like domain. Fe cation contacts are provided by Cys-428, Cys-431, Cys-461, and Cys-464.

The protein in the N-terminal section; belongs to the zinc metallo-hydrolase group 3 family. As to quaternary structure, homotetramer. Fe cation is required as a cofactor. Requires FMN as cofactor.

The protein resides in the cytoplasm. The protein operates within nitrogen metabolism; nitric oxide reduction. Functionally, anaerobic nitric oxide reductase; uses NADH to detoxify nitric oxide (NO), protecting several 4Fe-4S NO-sensitive enzymes. Has at least 2 reductase partners, only one of which (NorW, flavorubredoxin reductase) has been identified. NO probably binds to the di-iron center; electrons enter from the NorW at rubredoxin and are transferred sequentially to the FMN center and the di-iron center. Also able to function as an aerobic oxygen reductase. In Escherichia coli O6:H1 (strain CFT073 / ATCC 700928 / UPEC), this protein is Anaerobic nitric oxide reductase flavorubredoxin.